The following is a 216-amino-acid chain: 2,5-diamino-6-ribosylamino-4(3H)-pyrimidinone 5'-phosphate reductase (216 aa).

Residues Thr51, Asp55, Ser79–Arg82, Val126, and Gly148–Leu151 contribute to the NADP(+) site.

It belongs to the HTP reductase family. Homodimer.

The catalysed reaction is 2,5-diamino-6-(1-D-ribitylamino)pyrimidin-4(3H)-one 5'-phosphate + NADP(+) = 2,5-diamino-6-(1-D-ribosylamino)pyrimidin-4(3H)-one 5'-phosphate + NADPH + H(+). The enzyme catalyses 2,5-diamino-6-(1-D-ribitylamino)pyrimidin-4(3H)-one 5'-phosphate + NAD(+) = 2,5-diamino-6-(1-D-ribosylamino)pyrimidin-4(3H)-one 5'-phosphate + NADH + H(+). Its pathway is cofactor biosynthesis; riboflavin biosynthesis. In terms of biological role, catalyzes an early step in riboflavin biosynthesis, the NADPH-dependent reduction of the ribose side chain of 2,5-diamino-6-ribosylamino-4(3H)-pyrimidinone 5'-phosphate, yielding 2,5-diamino-6-ribitylamino-4(3H)-pyrimidinone 5'-phosphate. This is 2,5-diamino-6-ribosylamino-4(3H)-pyrimidinone 5'-phosphate reductase from Methanothermobacter thermautotrophicus (strain ATCC 29096 / DSM 1053 / JCM 10044 / NBRC 100330 / Delta H) (Methanobacterium thermoautotrophicum).